The chain runs to 109 residues: Resistin (109 aa).

The first 18 residues, Met1–Gly18, serve as a signal peptide directing secretion. 5 disulfide bridges follow: Cys51-Cys104, Cys63-Cys103, Cys72-Cys89, Cys74-Cys91, and Cys78-Cys93.

Belongs to the resistin/FIZZ family. As to quaternary structure, homodimer; disulfide-linked.

It is found in the secreted. In terms of biological role, hormone that seems to suppress insulin ability to stimulate glucose uptake into adipose cells. Potentially links obesity to diabetes. The polypeptide is Resistin (RETN) (Bos taurus (Bovine)).